The sequence spans 194 residues: Early growth response protein 1 (194 aa).

3 consecutive C2H2-type zinc fingers follow at residues 1-18 (CDRR…IRIH), 24-46 (FQCR…IRTH), and 52-74 (FACD…TKIH). The interval 66–88 (ERKRHTKIHLRQKDKKVEKAASV) is disordered. Positions 69-79 (RHTKIHLRQKD) are enriched in basic residues.

It belongs to the EGR C2H2-type zinc-finger protein family.

The protein resides in the nucleus. It localises to the cytoplasm. Its function is as follows. Transcriptional regulator. Recognizes and binds to the DNA sequence 5'-GCG(T/G)GGGCG-3'(EGR-site) in the promoter region of target genes. Binds double-stranded target DNA, irrespective of the cytosine methylation status. Regulates the transcription of numerous target genes, and thereby plays an important role in regulating the response to growth factors, DNA damage, and ischemia. Plays a role in the regulation of cell survival, proliferation and cell death. Mediates responses to ischemia and hypoxia; regulates the expression of proteins that are involved in inflammatory processes. Plays a role in regulating the expression of circadian clock genes. This chain is Early growth response protein 1 (EGR1), found in Coturnix japonica (Japanese quail).